Consider the following 501-residue polypeptide: Lysine--tRNA ligase (501 aa).

The Mg(2+) site is built by Glu-402 and Glu-409.

This sequence belongs to the class-II aminoacyl-tRNA synthetase family. Homodimer. It depends on Mg(2+) as a cofactor.

The protein localises to the cytoplasm. It carries out the reaction tRNA(Lys) + L-lysine + ATP = L-lysyl-tRNA(Lys) + AMP + diphosphate. The protein is Lysine--tRNA ligase of Helicobacter pylori (strain P12).